Here is a 296-residue protein sequence, read N- to C-terminus: Polyamine aminopropyltransferase (296 aa).

Residues glutamate 5 to glutamine 238 form the PABS domain. Glutamine 33 provides a ligand contact to S-methyl-5'-thioadenosine. Histidine 64 and aspartate 88 together coordinate spermidine. S-methyl-5'-thioadenosine contacts are provided by residues glutamate 108 and aspartate 140 to glycine 141. The Proton acceptor role is filled by aspartate 158. Aspartate 158–aspartate 161 contacts spermidine. Proline 165 serves as a coordination point for S-methyl-5'-thioadenosine.

The protein belongs to the spermidine/spermine synthase family. In terms of assembly, homodimer or homotetramer.

The protein localises to the cytoplasm. The enzyme catalyses S-adenosyl 3-(methylsulfanyl)propylamine + putrescine = S-methyl-5'-thioadenosine + spermidine + H(+). The protein operates within amine and polyamine biosynthesis; spermidine biosynthesis; spermidine from putrescine: step 1/1. Its function is as follows. Catalyzes the irreversible transfer of a propylamine group from the amino donor S-adenosylmethioninamine (decarboxy-AdoMet) to putrescine (1,4-diaminobutane) to yield spermidine. The sequence is that of Polyamine aminopropyltransferase from Yersinia pestis bv. Antiqua (strain Antiqua).